The following is a 130-amino-acid chain: Small ribosomal subunit protein uS8 (130 aa).

It belongs to the universal ribosomal protein uS8 family. In terms of assembly, part of the 30S ribosomal subunit.

Its function is as follows. One of the primary rRNA binding proteins, it binds directly to 16S rRNA central domain where it helps coordinate assembly of the platform of the 30S subunit. In Pyrobaculum islandicum (strain DSM 4184 / JCM 9189 / GEO3), this protein is Small ribosomal subunit protein uS8.